Here is a 181-residue protein sequence, read N- to C-terminus: ATP-dependent protease subunit HslV (181 aa).

The active site involves T7. Residues A162, C165, and T168 each coordinate Na(+).

This sequence belongs to the peptidase T1B family. HslV subfamily. In terms of assembly, a double ring-shaped homohexamer of HslV is capped on each side by a ring-shaped HslU homohexamer. The assembly of the HslU/HslV complex is dependent on binding of ATP.

It localises to the cytoplasm. It catalyses the reaction ATP-dependent cleavage of peptide bonds with broad specificity.. Its activity is regulated as follows. Allosterically activated by HslU binding. In terms of biological role, protease subunit of a proteasome-like degradation complex believed to be a general protein degrading machinery. The protein is ATP-dependent protease subunit HslV of Coxiella burnetii (strain Dugway 5J108-111).